Here is a 355-residue protein sequence, read N- to C-terminus: N-acetyl-gamma-glutamyl-phosphate reductase (355 aa).

Residue C152 is part of the active site.

It belongs to the NAGSA dehydrogenase family. Type 1 subfamily.

It localises to the cytoplasm. It catalyses the reaction N-acetyl-L-glutamate 5-semialdehyde + phosphate + NADP(+) = N-acetyl-L-glutamyl 5-phosphate + NADPH + H(+). It participates in amino-acid biosynthesis; L-arginine biosynthesis; N(2)-acetyl-L-ornithine from L-glutamate: step 3/4. Catalyzes the NADPH-dependent reduction of N-acetyl-5-glutamyl phosphate to yield N-acetyl-L-glutamate 5-semialdehyde. The chain is N-acetyl-gamma-glutamyl-phosphate reductase from Psychrobacter cryohalolentis (strain ATCC BAA-1226 / DSM 17306 / VKM B-2378 / K5).